Here is a 392-residue protein sequence, read N- to C-terminus: Putative RNA-binding protein Luc7-like 2 (392 aa).

Ser-18 carries the post-translational modification Phosphoserine. A coiled-coil region spans residues 102–177; the sequence is EVSKKRLAET…EAEEVYRNSM (76 aa). Positions 235–257 are enriched in basic and acidic residues; the sequence is KQEKRNQERLKRREEREREEREK. A disordered region spans residues 235–392; sequence KQEKRNQERL…SSEEREAGEI (158 aa). Over residues 258–321 the composition is skewed to basic residues; the sequence is LRRSRSHSKN…RSRSHQRSRH (64 aa). Lys-266 and Lys-269 each carry 5-hydroxylysine; by JMJD6. 2 stretches are compositionally biased toward basic and acidic residues: residues 337 to 364 and 377 to 392; these read KERF…DRDR and RSED…AGEI.

This sequence belongs to the Luc7 family. Interacts with SCNM1. In terms of tissue distribution, all isoforms are expressed in brain, kidney, heart, thymus, stomach, skeletal muscle, testis and spinal cord.

It localises to the nucleus speckle. The protein resides in the nucleus. The protein localises to the nucleoplasm. Its function is as follows. May bind to RNA via its Arg/Ser-rich domain. The protein is Putative RNA-binding protein Luc7-like 2 (Luc7l2) of Mus musculus (Mouse).